The primary structure comprises 422 residues: L-2-hydroxyglutarate dehydrogenase (422 aa).

This sequence belongs to the L2HGDH family. The cofactor is FAD.

It localises to the cell inner membrane. It catalyses the reaction (S)-2-hydroxyglutarate + a quinone = a quinol + 2-oxoglutarate. Its pathway is amino-acid degradation. Functionally, catalyzes the dehydrogenation of L-2-hydroxyglutarate (L2HG) to alpha-ketoglutarate and couples to the respiratory chain by feeding electrons from the reaction into the membrane quinone pool. Functions in a L-lysine degradation pathway that proceeds via cadaverine, glutarate and L-2-hydroxyglutarate. The polypeptide is L-2-hydroxyglutarate dehydrogenase (Escherichia coli (strain K12)).